Reading from the N-terminus, the 197-residue chain is Probable nicotinate-nucleotide adenylyltransferase (197 aa).

This sequence belongs to the NadD family.

The enzyme catalyses nicotinate beta-D-ribonucleotide + ATP + H(+) = deamido-NAD(+) + diphosphate. It functions in the pathway cofactor biosynthesis; NAD(+) biosynthesis; deamido-NAD(+) from nicotinate D-ribonucleotide: step 1/1. Catalyzes the reversible adenylation of nicotinate mononucleotide (NaMN) to nicotinic acid adenine dinucleotide (NaAD). This Bordetella parapertussis (strain 12822 / ATCC BAA-587 / NCTC 13253) protein is Probable nicotinate-nucleotide adenylyltransferase.